We begin with the raw amino-acid sequence, 109 residues long: MSKRPAFPGMGGMNMQQMMKQAKKLQEQMAKEQENITTQEFTGKAADDMVVATFTGDRTLKSLFIKPEAIDPDDPDMLEDLVIDAVNKGLKQIDQATQQSLGKYTKGLM.

It belongs to the YbaB/EbfC family. As to quaternary structure, homodimer.

The protein localises to the cytoplasm. It localises to the nucleoid. Its function is as follows. Binds to DNA and alters its conformation. May be involved in regulation of gene expression, nucleoid organization and DNA protection. The chain is Nucleoid-associated protein LBUL_1514 from Lactobacillus delbrueckii subsp. bulgaricus (strain ATCC BAA-365 / Lb-18).